Here is a 1169-residue protein sequence, read N- to C-terminus: Phospholipid-transporting ATPase IF (1169 aa).

Residues Leu1–Val47 lie on the Cytoplasmic side of the membrane. Residues Pro48–Val69 traverse the membrane as a helical segment. Residues Gln70–Asp74 are Extracellular-facing. A helical transmembrane segment spans residues Thr75 to Lys96. Over Gln97–Phe281 the chain is Cytoplasmic. A helical membrane pass occupies residues Leu282–Trp303. Residues Gln304–Asp333 are Extracellular-facing. A helical transmembrane segment spans residues Phe334–Val351. Residues Thr352–Ala868 are Cytoplasmic-facing. The active-site 4-aspartylphosphate intermediate is Asp399. ATP contacts are provided by Asp399, Lys400, Thr401, Glu523, Phe564, Lys587, Arg618, Thr698, Gly699, Asp700, Arg786, and Lys792. Mg(2+) is bound at residue Asp399. A Mg(2+)-binding site is contributed by Thr401. A required for binding to the RING-finger of HLTF region spans residues Lys794–Ser802. Asp813 contributes to the Mg(2+) binding site. Residues Asn816 and Asp817 each coordinate ATP. Residue Asp817 coordinates Mg(2+). The chain crosses the membrane as a helical span at residues Thr869–Phe890. At Tyr891 to Ser902 the chain is on the extracellular side. A helical transmembrane segment spans residues Val903–Leu922. Topologically, residues Leu923 to Thr952 are cytoplasmic. The chain crosses the membrane as a helical span at residues Phe953 to Leu974. Residues Ile975 to Gly989 lie on the Extracellular side of the membrane. The helical transmembrane segment at Asn990–Glu1012 threads the bilayer. The Cytoplasmic segment spans residues Thr1013–Thr1017. Residues Trp1018 to Gly1039 traverse the membrane as a helical segment. Residues Gly1040–Gln1057 are Extracellular-facing. A helical membrane pass occupies residues Leu1058–Lys1082. Residues Lys1083 to Cys1169 are Cytoplasmic-facing. Residue Ser1146 is modified to Phosphoserine.

It belongs to the cation transport ATPase (P-type) (TC 3.A.3) family. Type IV subfamily. Component of a P4-ATPase flippase complex which consists of a catalytic alpha subunit ATP11B and an accessory beta subunit TMEM30A. In terms of assembly, interacts with HLTF (via the RING-finger). Mg(2+) serves as cofactor. Ubiquitously expressed.

Its subcellular location is the recycling endosome membrane. It localises to the early endosome. The protein localises to the endoplasmic reticulum. The protein resides in the golgi apparatus. It is found in the trans-Golgi network. Its subcellular location is the nucleus inner membrane. The enzyme catalyses ATP + H2O + phospholipidSide 1 = ADP + phosphate + phospholipidSide 2.. It carries out the reaction a 1,2-diacyl-sn-glycero-3-phospho-L-serine(out) + ATP + H2O = a 1,2-diacyl-sn-glycero-3-phospho-L-serine(in) + ADP + phosphate + H(+). It catalyses the reaction a 1,2-diacyl-sn-glycero-3-phosphoethanolamine(out) + ATP + H2O = a 1,2-diacyl-sn-glycero-3-phosphoethanolamine(in) + ADP + phosphate + H(+). Its function is as follows. Catalytic component of a P4-ATPase flippase complex which catalyzes the hydrolysis of ATP coupled to the transport of aminophospholipids, phosphatidylserines (PS) and phosphatidylethanolamines (PE), from the outer to the inner leaflet of intracellular membranes. May contribute to the maintenance of membrane lipid asymmetry in endosome compartment. Appears to play a role in the subnuclear trafficking of transcription factors with RING motifs. In Oryctolagus cuniculus (Rabbit), this protein is Phospholipid-transporting ATPase IF (ATP11B).